A 655-amino-acid polypeptide reads, in one-letter code: NAD(P)H-quinone oxidoreductase subunit 5, chloroplastic (655 aa).

Helical transmembrane passes span 7 to 27, 40 to 60, 89 to 109, 124 to 144, 147 to 167, 185 to 205, 226 to 246, 265 to 285, 296 to 316, 334 to 354, 361 to 381, 402 to 422, 434 to 454, 488 to 508, 533 to 553, and 635 to 655; these read YAWL…LGLI, FAFF…SILI, IDPL…LVMI, FFAY…SPNL, IYVF…FWFT, GDFG…SFEF, HPVQ…GPMA, TPIS…FLVA, IVMG…AIIA, LGYM…FHLI, ALLF…VGFN, AITF…ACFW, AQPI…FYMF, ILIP…VGTP, LSMS…ASLI, and QSYV…SQGF.

The protein belongs to the complex I subunit 5 family. As to quaternary structure, NDH is composed of at least 16 different subunits, 5 of which are encoded in the nucleus.

The protein resides in the plastid. It localises to the chloroplast thylakoid membrane. The enzyme catalyses a plastoquinone + NADH + (n+1) H(+)(in) = a plastoquinol + NAD(+) + n H(+)(out). It catalyses the reaction a plastoquinone + NADPH + (n+1) H(+)(in) = a plastoquinol + NADP(+) + n H(+)(out). Functionally, NDH shuttles electrons from NAD(P)H:plastoquinone, via FMN and iron-sulfur (Fe-S) centers, to quinones in the photosynthetic chain and possibly in a chloroplast respiratory chain. The immediate electron acceptor for the enzyme in this species is believed to be plastoquinone. Couples the redox reaction to proton translocation, and thus conserves the redox energy in a proton gradient. The chain is NAD(P)H-quinone oxidoreductase subunit 5, chloroplastic (ndhF) from Chlorokybus atmophyticus (Soil alga).